Reading from the N-terminus, the 396-residue chain is Proteinase-activated receptor 4 (396 aa).

A signal peptide spans 1–16 (MCWPLLYPLVLGLSIS). A propeptide spans 17–59 (LAEGIQTPSIYDDVESTRGSHEGPLGPTVELKEPKSSDKPNPR) (removed for receptor activation). The tract at residues 28-62 (DDVESTRGSHEGPLGPTVELKEPKSSDKPNPRGYP) is disordered. Residues 46 to 57 (ELKEPKSSDKPN) show a composition bias toward basic and acidic residues. At 60–94 (GYPGKFCANDSDTLELPASSQALLLGWVPTRLVPA) the chain is on the extracellular side. Residue Asn-68 is glycosylated (N-linked (GlcNAc...) asparagine). Residues 95 to 115 (LYGLVVAVGLPANGLALWVLA) traverse the membrane as a helical segment. Over 116–120 (TRVPR) the chain is Cytoplasmic. Residues 121-141 (LPSTILLMNLAVADLLLALVL) form a helical membrane-spanning segment. Residues 142–162 (PPRLAYHLRGQRWPFGEAACR) lie on the Extracellular side of the membrane. Cys-161 and Cys-240 are disulfide-bonded. The chain crosses the membrane as a helical span at residues 163–183 (VATAALYGHMYGSVLLLAAVS). At 184 to 203 (LDRYLALVHPLRARALRGQR) the chain is on the cytoplasmic side. Residues 204-224 (LTTGLCLVAWLSAATLALPLT) traverse the membrane as a helical segment. At 225–255 (LHRQTFRLAGSDRMLCHDALPLTEQTSHWRP) the chain is on the extracellular side. Residues 256 to 276 (AFICLAVLGCFVPLLAMGLCY) traverse the membrane as a helical segment. Residues 277–295 (GATLRALAANGQRYSHALR) lie on the Cytoplasmic side of the membrane. The helical transmembrane segment at 296 to 316 (LTALVLFSAVASFTPSNVLLV) threads the bilayer. Residues 317–331 (LHYSNPSPEAWGNLY) lie on the Extracellular side of the membrane. Residues 332 to 355 (GAYVPSLALSTLNSCVDPFIYYYV) traverse the membrane as a helical segment. At 356–396 (SHEFREKVRAMLCRQPEASSSSQASREAGSRGTAICSSTLL) the chain is on the cytoplasmic side.

It belongs to the G-protein coupled receptor 1 family. In terms of processing, a proteolytic cleavage generates a new N-terminus that functions as a tethered ligand. Highly expressed in the spleen. Slight expression in the heart, lung, skeletal muscle and kidney. No detectable expression in brain, liver or testis. Also detected in platelets.

It is found in the cell membrane. Its function is as follows. Receptor for activated thrombin or trypsin coupled to G proteins that stimulate phosphoinositide hydrolysis. May play a role in platelets activation. The sequence is that of Proteinase-activated receptor 4 (F2rl3) from Mus musculus (Mouse).